The following is a 169-amino-acid chain: Cell division inhibitor SulA (169 aa).

Positions 106 to 112 are ftsZ binding; the sequence is ALRTGNY. The lon protease binding stretch occupies residues 162–169; the sequence is KIHSNLYH.

The protein belongs to the SulA family. In terms of assembly, interacts with FtsZ. Is rapidly cleaved and degraded by the Lon protease once DNA damage is repaired.

Its function is as follows. Component of the SOS system and an inhibitor of cell division. Accumulation of SulA causes rapid cessation of cell division and the appearance of long, non-septate filaments. In the presence of GTP, binds a polymerization-competent form of FtsZ in a 1:1 ratio, thus inhibiting FtsZ polymerization and therefore preventing it from participating in the assembly of the Z ring. This mechanism prevents the premature segregation of damaged DNA to daughter cells during cell division. This is Cell division inhibitor SulA from Escherichia coli O7:K1 (strain IAI39 / ExPEC).